A 460-amino-acid polypeptide reads, in one-letter code: MSDYETILKGKYPAKDHAKRVADHIRSKVPGANGILYLEGRHTKLEEDSDHPEPFRQRRYFFYLTGCILADCHYIFDLKTSQSTLFIPPVDPEDVIWSGMPMTAEEAKEKYDIDNVLYTNEVNAELARLGKGSGSTAFAIANQVLDTVSFIGFEDKNFDVLKGAIEECRVVKDDYEVALTRKANAISTTAHHAVMKAVNTAKNEQELEAIFLERCFAHGAKNQAYHAIHAAGRAAATLHYVHNSAPLDGKLNVLLDGGAEWDCYASDITRTFPISGKFSKESRAIYDIVLKMQLESIKVLKEGILWDDVHELAHKIAIEGLLDLGILKGEADEILKARTSVAFFPHGLGHYLGMDTHDVGGTPNYADSDPMFRYLRKRGTLPAGSLVTVEPGIYFCSFIIEPYLKDPTHSKYIDTDVLDKYWDVGGVRIEDNLLITKTGSENLTPTIKEPEEIEKFVGSS.

4 residues coordinate Mn(2+): aspartate 256, aspartate 267, glutamate 390, and glutamate 430.

The protein belongs to the peptidase M24B family. The cofactor is Mn(2+).

The catalysed reaction is Release of any N-terminal amino acid, including proline, that is linked to proline, even from a dipeptide or tripeptide.. Catalyzes the removal of a penultimate prolyl residue from the N-termini of peptides. In Verticillium alfalfae (strain VaMs.102 / ATCC MYA-4576 / FGSC 10136) (Verticillium wilt of alfalfa), this protein is Probable Xaa-Pro aminopeptidase VDBG_02538.